A 470-amino-acid polypeptide reads, in one-letter code: Putative multidrug resistance protein MdtD (470 aa).

Residues 1-11 lie on the Periplasmic side of the membrane; that stretch reads MTELPDNTRWQ. The chain crosses the membrane as a helical span at residues 12-32; it reads LWIVAFGFFMQSLDTTIVNTA. Residues 33–48 lie on the Cytoplasmic side of the membrane; it reads LPSMAKSLGESPLHMH. Residues 49–69 form a helical membrane-spanning segment; sequence MVVVSYVLTVAVMLPASGWLA. Residues 70-76 lie on the Periplasmic side of the membrane; sequence DKIGVRN. A helical membrane pass occupies residues 77–97; it reads IFFAAIVLFTLGSLFCALSGT. Over 98–101 the chain is Cytoplasmic; that stretch reads LNQL. The chain crosses the membrane as a helical span at residues 102-124; that stretch reads VLARVLQGVGGAMMVPVGRLTVM. The Periplasmic portion of the chain corresponds to 125-137; it reads KIVPRAQYMAAMT. A helical membrane pass occupies residues 138 to 158; it reads FVTLPGQIGPLLGPALGGVLV. The Cytoplasmic segment spans residues 159–164; the sequence is EYASWH. The chain crosses the membrane as a helical span at residues 165-185; that stretch reads WIFLINIPVGIVGAMATFMLM. The Periplasmic segment spans residues 186–196; the sequence is PNYTIETRRFD. A helical transmembrane segment spans residues 197–217; sequence LPGFLLLAIGMAVLTLALDGS. Residues 218–224 lie on the Cytoplasmic side of the membrane; sequence KSMGISP. The helical transmembrane segment at 225-245 threads the bilayer; that stretch reads WTLAGLAAGGAAAILLYLFHA. At 246–262 the chain is on the periplasmic side; it reads KKSSGALFSLRLFRTPT. The helical transmembrane segment at 263 to 283 threads the bilayer; that stretch reads FSLGLLGSFAGRIGSGMLPFM. Over 284–285 the chain is Cytoplasmic; it reads TP. A helical transmembrane segment spans residues 286-306; the sequence is VFLQIGLGFSPFHAGLMMIPM. Residues 307 to 341 lie on the Periplasmic side of the membrane; the sequence is VLGSMGMKRIVVQIVNRFGYRRVLVATTLGLALVS. Residues 342–362 traverse the membrane as a helical segment; sequence LLFMSVALLGWYYLLPLVLLL. Residues 363-395 are Cytoplasmic-facing; the sequence is QGMVNSARFSSMNTLTLKDLPDTLASSGNSLLS. Residues 396-416 traverse the membrane as a helical segment; that stretch reads MIMQLSMSIGVTIAGMLLGMF. Topologically, residues 417-430 are periplasmic; the sequence is GQQHIGIDSSATHH. A helical membrane pass occupies residues 431-451; it reads VFMYTWLCMAVIIALPAIIFA. The Cytoplasmic portion of the chain corresponds to 452–470; that stretch reads RVPNDTQQNMVISRRKRSL.

The protein belongs to the major facilitator superfamily. TCR/Tet family.

The protein localises to the cell inner membrane. The chain is Putative multidrug resistance protein MdtD from Salmonella paratyphi A (strain ATCC 9150 / SARB42).